The chain runs to 289 residues: MALSFKNSSGVLKAKTLKDGFVTSSDIETTVHDFSYEKPDLSSVDGFSLKSLLSSDGWHIVVAYQSVTNSERLNNNKKNNKTQRFKLFTFDIIVIPGLKPNKSKNVVSYNRFMALCIGMICYHKKWKVFNWSNKRYEDNKNTINFNEDDDFMNKLAMSAGFSKEHKYHWFYSTGFEYTFDIFPAEVIAMSLFRWSHRVELKIKYEHESDLVAPMVRQVTKRGNISDVMDIVGKDIIAKKYEEIVKDRSSIGIGTKYNDILDEFKDIFNKIDSSSLDSTIKNCFNKIDGE.

N-acetylalanine; by host is present on A2.

Belongs to the high plain virus capsid family.

It localises to the virion. This chain is Capsid protein, found in Hordeum vulgare (Barley).